A 124-amino-acid polypeptide reads, in one-letter code: Urocortin (124 aa).

Positions 1–25 are cleaved as a signal peptide; the sequence is MRQAGRAALLAALLLLVQLCPGSSQ. The interval 23 to 46 is disordered; the sequence is SSQRSPEAAGVQDPSLRWSPGARN. A propeptide spanning residues 26-82 is cleaved from the precursor; it reads RSPEAAGVQDPSLRWSPGARNQGGGARALLLLLAERFPRRAGPGRLGLGTAGERPRR. Valine amide is present on Val122.

This sequence belongs to the sauvagine/corticotropin-releasing factor/urotensin I family. In terms of assembly, interacts with CRHR1 and CRHR2 (via their N-terminal extracellular domain). Keratinocytes in epidermis and the outer and inner root sheaths of hair follicles, epithelium of sebaceous and sweat glands, erector pili muscle, cutaneous blood vessel walls, cutaneous nerves and dermal mononuclear cells. Detected in plasma cells in the lamia propria in colon mucosa (at protein level). Expressed in pituitary and adrenal glands. Detected in plasma cells in the lamia propria in colon mucosa.

The protein resides in the secreted. Acts in vitro to stimulate the secretion of adrenocorticotropic hormone (ACTH). Binds with high affinity to CRF receptor types 1, 2-alpha, and 2-beta. Plays a role in the establishment of normal hearing thresholds. Reduces food intake and regulates ghrelin levels in gastric body and plasma. The sequence is that of Urocortin (UCN) from Homo sapiens (Human).